Reading from the N-terminus, the 225-residue chain is Urease accessory protein UreG (225 aa).

25–32 (GPVGAGKT) serves as a coordination point for GTP.

The protein belongs to the SIMIBI class G3E GTPase family. UreG subfamily. Homodimer. UreD, UreF and UreG form a complex that acts as a GTP-hydrolysis-dependent molecular chaperone, activating the urease apoprotein by helping to assemble the nickel containing metallocenter of UreC. The UreE protein probably delivers the nickel.

It localises to the cytoplasm. Functionally, facilitates the functional incorporation of the urease nickel metallocenter. This process requires GTP hydrolysis, probably effectuated by UreG. This Haemophilus influenzae (strain 86-028NP) protein is Urease accessory protein UreG.